The following is a 305-amino-acid chain: HPr kinase/phosphorylase (305 aa).

Catalysis depends on residues His138 and Lys159. Residue 153 to 160 (GESGIGKS) coordinates ATP. Ser160 serves as a coordination point for Mg(2+). The active-site Proton acceptor; for phosphorylation activity. Proton donor; for dephosphorylation activity is the Asp177. The segment at 201 to 210 (IEIRGIGILD) is important for the catalytic mechanism of both phosphorylation and dephosphorylation. Glu202 contributes to the Mg(2+) binding site. Arg243 is an active-site residue. The interval 264–269 (PVRPGR) is important for the catalytic mechanism of dephosphorylation.

The protein belongs to the HPrK/P family. In terms of assembly, homohexamer. The cofactor is Mg(2+).

The enzyme catalyses [HPr protein]-L-serine + ATP = [HPr protein]-O-phospho-L-serine + ADP + H(+). It carries out the reaction [HPr protein]-O-phospho-L-serine + phosphate + H(+) = [HPr protein]-L-serine + diphosphate. Catalyzes the ATP- as well as the pyrophosphate-dependent phosphorylation of a specific serine residue in HPr, a phosphocarrier protein of the phosphoenolpyruvate-dependent sugar phosphotransferase system (PTS). HprK/P also catalyzes the pyrophosphate-producing, inorganic phosphate-dependent dephosphorylation (phosphorolysis) of seryl-phosphorylated HPr (P-Ser-HPr). The two antagonistic activities of HprK/P are regulated by several intracellular metabolites, which change their concentration in response to the absence or presence of rapidly metabolisable carbon sources (glucose, fructose, etc.) in the growth medium. Therefore, by controlling the phosphorylation state of HPr, HPrK/P is a sensor enzyme that plays a major role in the regulation of carbon metabolism and sugar transport: it mediates carbon catabolite repression (CCR), and regulates PTS-catalyzed carbohydrate uptake and inducer exclusion. This chain is HPr kinase/phosphorylase, found in Caldanaerobacter subterraneus subsp. tengcongensis (strain DSM 15242 / JCM 11007 / NBRC 100824 / MB4) (Thermoanaerobacter tengcongensis).